Here is a 370-residue protein sequence, read N- to C-terminus: 4-hydroxy-3-methylbut-2-en-1-yl diphosphate synthase (flavodoxin) (370 aa).

Residues cysteine 270, cysteine 273, cysteine 305, and glutamate 312 each coordinate [4Fe-4S] cluster.

The protein belongs to the IspG family. [4Fe-4S] cluster is required as a cofactor.

The catalysed reaction is (2E)-4-hydroxy-3-methylbut-2-enyl diphosphate + oxidized [flavodoxin] + H2O + 2 H(+) = 2-C-methyl-D-erythritol 2,4-cyclic diphosphate + reduced [flavodoxin]. The protein operates within isoprenoid biosynthesis; isopentenyl diphosphate biosynthesis via DXP pathway; isopentenyl diphosphate from 1-deoxy-D-xylulose 5-phosphate: step 5/6. Converts 2C-methyl-D-erythritol 2,4-cyclodiphosphate (ME-2,4cPP) into 1-hydroxy-2-methyl-2-(E)-butenyl 4-diphosphate. This Marinomonas sp. (strain MWYL1) protein is 4-hydroxy-3-methylbut-2-en-1-yl diphosphate synthase (flavodoxin).